Reading from the N-terminus, the 257-residue chain is Probable 6-phosphogluconolactonase (257 aa).

It belongs to the glucosamine/galactosamine-6-phosphate isomerase family. 6-phosphogluconolactonase subfamily.

The catalysed reaction is 6-phospho-D-glucono-1,5-lactone + H2O = 6-phospho-D-gluconate + H(+). The protein operates within carbohydrate degradation; pentose phosphate pathway; D-ribulose 5-phosphate from D-glucose 6-phosphate (oxidative stage): step 2/3. Its function is as follows. Hydrolysis of 6-phosphogluconolactone to 6-phosphogluconate. The chain is Probable 6-phosphogluconolactonase from Schizosaccharomyces pombe (strain 972 / ATCC 24843) (Fission yeast).